The sequence spans 449 residues: MLSSQTSSIFTVSRLNQTVRLLLEQEMGQVWISGEISNFTQPASGHWYFTLKDDTAQVRCAMFRNSNRRVTFRPQHGQQVLVRANITLYEPRGDYQIIAESMQPAGEGLLQQKYEQLKAKLQAEGLFDQQHKQPLPSPAHCVGVITSKTGAALHDILHVLKRRDPSLPVIIYPTAVQGDDAPGQIVRAIELANARGECDVLIVGRGGGSLEDLWSFNDERVARAIFASRIPVVSAVGHETDVTIADFVADLRAPTPSAAAEIVSRNQQELLRQIQSAQQRLGMAMDYYLANRSRRFTQIFHRLQQQHPQLRLARQQTALERLRQRMGFALEARIKQANQRQQRVSQRLSQQNPQPRIHRAQSRIQQLEYRLTENIRSRLSEQRERFGNAVTHLEAVSPLATLARGYTVSTTTDGKVLKKIKQVKAGDIMTTRLEDGWLESEVKSVTPGT.

This sequence belongs to the XseA family. In terms of assembly, heterooligomer composed of large and small subunits.

The protein localises to the cytoplasm. The enzyme catalyses Exonucleolytic cleavage in either 5'- to 3'- or 3'- to 5'-direction to yield nucleoside 5'-phosphates.. Bidirectionally degrades single-stranded DNA into large acid-insoluble oligonucleotides, which are then degraded further into small acid-soluble oligonucleotides. This Salmonella dublin (strain CT_02021853) protein is Exodeoxyribonuclease 7 large subunit.